The chain runs to 1004 residues: Presequence protease, mitochondrial (1004 aa).

A mitochondrion-targeting transit peptide spans 1–34 (MLRNAAAGARKAVTELSQFPKPGEKLHGFTLVRS). Residue His-84 coordinates Zn(2+). Glu-87 (proton acceptor) is an active-site residue. His-88 contacts Zn(2+). Residue Glu-160 is part of the active site. A Zn(2+)-binding site is contributed by Glu-188.

Belongs to the peptidase M16 family. PreP subfamily. Monomer and homodimer; homodimerization is induced by binding of the substrate. Zn(2+) is required as a cofactor.

Its subcellular location is the mitochondrion intermembrane space. The protein localises to the mitochondrion matrix. In terms of biological role, degrades mitochondrial transit peptides after their cleavage in the intermembrane space or in the matrix, and presequence peptides; clearance of these peptides is required to keep the presequence processing machinery running. Preferentially cleaves the N-terminal side of paired basic amino acid residues. Also degrades other unstructured peptides. May function as an ATP-dependent peptidase as opposed to a metalloendopeptidase. In Gibberella zeae (strain ATCC MYA-4620 / CBS 123657 / FGSC 9075 / NRRL 31084 / PH-1) (Wheat head blight fungus), this protein is Presequence protease, mitochondrial (CYM1).